A 128-amino-acid chain; its full sequence is Fluoride-specific ion channel FluC (128 aa).

4 helical membrane-spanning segments follow: residues 3-23 (FSVI…RFLI), 34-54 (LFPV…GFLY), 69-89 (FITG…ETLL), and 100-120 (FLNI…AIIL). Na(+) is bound by residues glycine 75 and threonine 78.

This sequence belongs to the fluoride channel Fluc/FEX (TC 1.A.43) family.

The protein resides in the cell inner membrane. It catalyses the reaction fluoride(in) = fluoride(out). Na(+) is not transported, but it plays an essential structural role and its presence is essential for fluoride channel function. Functionally, fluoride-specific ion channel. Important for reducing fluoride concentration in the cell, thus reducing its toxicity. The protein is Fluoride-specific ion channel FluC of Nitratiruptor sp. (strain SB155-2).